Here is a 3093-residue protein sequence, read N- to C-terminus: Genome polyprotein (3093 aa).

One can recognise a Peptidase S30 domain in the interval 255–403; the sequence is KRLLRHVHQA…TTTGERIEYY (149 aa). Active-site for P1 proteinase activity residues include histidine 311, aspartate 323, and serine 355. A Peptidase C6 domain is found at 690–809; the sequence is HYVPKVGYCY…ASELKEYEIG (120 aa). Residues cysteine 698 and histidine 769 each act as for helper component proteinase activity in the active site. The Helicase ATP-binding domain maps to 1215–1366; sequence RVLADKDNEF…AQKSLDIMTL (152 aa). An ATP-binding site is contributed by 1228 to 1235; sequence GHVGCGKS. A DEVH box motif is present at residues 1316–1319; that stretch reads DEVH. The region spanning 1367–1546 is the Helicase C-terminal domain; sequence PTMTPLDFVK…QVPPVLRNVN (180 aa). The Nuclear localization signal signature appears at 1883 to 1895; sequence DKVRKKANVHAMQ. An O-(5'-phospho-RNA)-tyrosine modification is found at tyrosine 1915. The 217-residue stretch at 2041 to 2257 folds into the Peptidase C4 domain; that stretch reads SKALYGGPRC…VDVGGLYIHN (217 aa). Active-site for nuclear inclusion protein A activity residues include histidine 2082, aspartate 2121, and cysteine 2193. One can recognise a RdRp catalytic domain in the interval 2516-2639; sequence EWFIDADGSQ…NANEEAKDVV (124 aa). Residues 2800-2826 are compositionally biased toward low complexity; the sequence is NAAATSGATTPAQNVGAGTTTPAKATP. The tract at residues 2800-2842 is disordered; sequence NAAATSGATTPAQNVGAGTTTPAKATPQSGRRPSFGSLIDNPI.

It belongs to the potyviridae genome polyprotein family. In terms of processing, VPg is uridylylated by the polymerase and is covalently attached to the 5'-end of the genomic RNA. This uridylylated form acts as a nucleotide-peptide primer for the polymerase. Genome polyprotein of potyviruses undergoes post-translational proteolytic processing by the main proteinase NIa-pro resulting in the production of at least ten individual proteins. The P1 proteinase and the HC-pro cleave only their respective C-termini autocatalytically. 6K1 is essential for proper proteolytic separation of P3 from CI.

The protein localises to the host cytoplasmic vesicle. It is found in the virion. The enzyme catalyses RNA(n) + a ribonucleoside 5'-triphosphate = RNA(n+1) + diphosphate. The catalysed reaction is Hydrolyzes glutaminyl bonds, and activity is further restricted by preferences for the amino acids in P6 - P1' that vary with the species of potyvirus, e.g. Glu-Xaa-Xaa-Tyr-Xaa-Gln-|-(Ser or Gly) for the enzyme from tobacco etch virus. The natural substrate is the viral polyprotein, but other proteins and oligopeptides containing the appropriate consensus sequence are also cleaved.. It catalyses the reaction Hydrolyzes a Gly-|-Gly bond at its own C-terminus, commonly in the sequence -Tyr-Xaa-Val-Gly-|-Gly, in the processing of the potyviral polyprotein.. Required for aphid transmission and also has proteolytic activity. Only cleaves a Gly-Gly dipeptide at its own C-terminus. Interacts with virions and aphid stylets. Acts as a suppressor of RNA-mediated gene silencing, also known as post-transcriptional gene silencing (PTGS), a mechanism of plant viral defense that limits the accumulation of viral RNAs. May have RNA-binding activity. Functionally, has helicase activity. It may be involved in replication. In terms of biological role, indispensable for virus replication. Reduces the abundance of host transcripts related to jasmonic acid biosynthesis therefore altering the host defenses. In order to increase its own stability, decreases host protein degradation pathways. Its function is as follows. Indispensable for virus replication. Mediates the cap-independent, EIF4E-dependent translation of viral genomic RNAs. Binds to the cap-binding site of host EIF4E and thus interferes with the host EIF4E-dependent mRNA export and translation. VPg-RNA directly binds EIF4E and is a template for transcription. Also forms trimeric complexes with EIF4E-EIF4G, which are templates for translation. Functionally, has RNA-binding and proteolytic activities. In terms of biological role, an RNA-dependent RNA polymerase that plays an essential role in the virus replication. Its function is as follows. Involved in aphid transmission, cell-to-cell and systemis movement, encapsidation of the viral RNA and in the regulation of viral RNA amplification. In Brome streak virus (strain 11-Cal) (BStV), this protein is Genome polyprotein.